The following is a 1118-amino-acid chain: Sodium-driven chloride bicarbonate exchanger (1118 aa).

2 disordered regions span residues Met1–Val23 and Gly58–Gln97. Topologically, residues Met1–Cys509 are cytoplasmic. The span at Arg59–Asp76 shows a compositional bias: basic residues. Basic and acidic residues predominate over residues Arg77–Pro90. Position 89 is a phosphoserine (Ser89). The residue at position 94 (Thr94) is a Phosphothreonine. Residues His221 and His223 each coordinate Zn(2+). Disordered regions lie at residues Ala269–Pro310 and Asn457–Leu476. Phosphoserine is present on Ser276. A helical membrane pass occupies residues Leu510–Leu530. Residues Leu531 to Arg538 lie on the Extracellular side of the membrane. Residues Ile539 to Gly559 traverse the membrane as a helical segment. At Gly560–Pro562 the chain is on the cytoplasmic side. The chain crosses the membrane as a helical span at residues Leu563 to Cys583. The Extracellular segment spans residues Lys584–Ser596. A helical membrane pass occupies residues Ile597–Val617. Topologically, residues Cys618–Glu626 are cytoplasmic. Residues Ala627 to Leu647 traverse the membrane as a helical segment. Over Ser648–Pro720 the chain is Extracellular. N-linked (GlcNAc...) asparagine glycosylation is found at Asn677, Asn687, and Asn697. Residues Tyr721 to Ala741 traverse the membrane as a helical segment. At Thr742–Asp762 the chain is on the cytoplasmic side. The chain crosses the membrane as a helical span at residues Phe763–Ser783. Topologically, residues Pro784–Asn809 are extracellular. A helical membrane pass occupies residues Pro810–Met830. At Asp831–Asp855 the chain is on the cytoplasmic side. The helical transmembrane segment at Leu856–Ala876 threads the bilayer. The Extracellular segment spans residues Ala877 to Thr912. A helical transmembrane segment spans residues Gly913 to Ile933. Topologically, residues Pro934–Met935 are cytoplasmic. Residues Pro936–Phe956 traverse the membrane as a helical segment. Residues Asp957–Trp998 lie on the Extracellular side of the membrane. Residues Ile999 to Val1019 traverse the membrane as a helical segment. The Cytoplasmic portion of the chain corresponds to Arg1020–Ser1118. 2 positions are modified to phosphoserine: Ser1057 and Ser1085.

The protein belongs to the anion exchanger (TC 2.A.31) family. Post-translationally, N-glycosylated. In the brain, detected in cerebral cortex, subcortex, cerebellum, hippocampus and medulla (at protein level). In the cerebrum, expressed at high levels throughout the cortex, at lower levels in striatum and not detectable in the corpus callosum (at protein level). In the cerebellum, detected at high levels in the molecular layer but at very low levels in the granular layer (at protein level). In the central nervous system, detected in neurons in the olfactory bulb, cortex and cerebellum (at protein level). Within the hippocampus, abundantly expressed in CA3 pyramidal cells (at protein level). Strongly expressed in the retina with high levels in bipolar and amacrine cells (at protein level). Expressed in the epithelial cells of the choroid plexus. During embryonic development, expressed in neurons of the central nervous system. Also expressed in the peripheral nervous system and in non-neuronal tissues such as the dura and some epithelia including the acid-secreting epithelium of the stomach and the duodenal epithelium. In the embryonic retina, expression is restricted to the neuronal cell layer and the retinal pigment epithelium. As to expression, expressed at high levels in brain and at low levels in the pituitary, testis, kidney and ileum. Also expressed in pancreatic islets.

The protein resides in the basolateral cell membrane. It is found in the apical cell membrane. It localises to the cell projection. The protein localises to the dendrite. Its subcellular location is the axon. The protein resides in the perikaryon. It is found in the presynapse. It localises to the postsynapse. The enzyme catalyses 2 hydrogencarbonate(out) + chloride(in) + Na(+)(out) = 2 hydrogencarbonate(in) + chloride(out) + Na(+)(in). Its activity is regulated as follows. Zinc-binding negatively regulates its activity. In terms of biological role, sodium/bicarbonate cotransporter which plays an important role in regulating intracellular pH. Has been shown to act as a sodium/bicarbonate cotransporter in exchange for intracellular chloride. Has also been shown to act as a sodium/biocarbonate cotransporter which is not responsible for net efflux of chloride, with the observed chloride efflux being due to chloride self-exchange. Controls neuronal pH and may contribute to the secretion of cerebrospinal fluid. Acting on presynaptic intracellular pH, it promotes GABA release, reduces the excitability of CA1 pyramidal neurons, and modulates short-term synaptic plasticity. Required in retinal cells to maintain normal pH which is necessary for normal vision. In the kidney, likely to mediate bicarbonate reclamation in the apical membrane of the proximal tubules. Its function is as follows. Sodium/bicarbonate cotransporter which mediates cotransport of sodium and bicarbonate in association with an efflux of intracellular chloride. The polypeptide is Sodium-driven chloride bicarbonate exchanger (Mus musculus (Mouse)).